We begin with the raw amino-acid sequence, 511 residues long: ATP synthase subunit alpha (511 aa).

170–177 (GDRQTGKT) is an ATP binding site.

Belongs to the ATPase alpha/beta chains family. As to quaternary structure, F-type ATPases have 2 components, CF(1) - the catalytic core - and CF(0) - the membrane proton channel. CF(1) has five subunits: alpha(3), beta(3), gamma(1), delta(1), epsilon(1). CF(0) has three main subunits: a(1), b(2) and c(9-12). The alpha and beta chains form an alternating ring which encloses part of the gamma chain. CF(1) is attached to CF(0) by a central stalk formed by the gamma and epsilon chains, while a peripheral stalk is formed by the delta and b chains.

The protein localises to the cell inner membrane. The catalysed reaction is ATP + H2O + 4 H(+)(in) = ADP + phosphate + 5 H(+)(out). Produces ATP from ADP in the presence of a proton gradient across the membrane. The alpha chain is a regulatory subunit. The sequence is that of ATP synthase subunit alpha from Granulibacter bethesdensis (strain ATCC BAA-1260 / CGDNIH1).